The following is a 460-amino-acid chain: MVFDTIAAISTFPGEAGIGIVRLSGDDALEIISKIFKPYKSKDIKKVKSHTLHYGHIVDPETEEVYDEVLVSIMEKPNTYTREDIVEINCHGGIVVTSKILELVLKQGARLAEPGEFTKRAFLNGRIDLSQAEAVIDIIRAKTMLANRYAQKQLVGYVGSKIKEMKDKIMGLLVHLLALIDFPEEDVEELERKEILETAKEIVEDIDKLIASSESGRIIREGLKTAIIGKPNVGKSSLLNALLKENRAIVTDIPGTTRDIIEEYVNVKGIPIKLIDTAGIRDTDELVEKIGVTKSKEVLAEADLILFVLDASRELTKEDYEIFDILTGKNIIFVLNKIDLPKKIDEKELKDLTKDGIIIEVSTVEKIGLEELENTIYNLVFRGDISLREDEIVINSRHKEALINAKKYMESCVEAIEGGYSEDLITIDLNAALDQLGKITGETATEDLINEIFERFCVGK.

(6S)-5-formyl-5,6,7,8-tetrahydrofolate-binding residues include Arg22, Glu87, and Arg126. The TrmE-type G domain maps to 222–381 (GLKTAIIGKP…LENTIYNLVF (160 aa)). Asn232 is a K(+) binding site. Residues 232-237 (NVGKSS), 251-257 (TDIPGTT), and 276-279 (DTAG) each bind GTP. Ser236 is a binding site for Mg(2+). Thr251, Ile253, and Thr256 together coordinate K(+). Thr257 provides a ligand contact to Mg(2+). Lys460 is a binding site for (6S)-5-formyl-5,6,7,8-tetrahydrofolate.

Belongs to the TRAFAC class TrmE-Era-EngA-EngB-Septin-like GTPase superfamily. TrmE GTPase family. As to quaternary structure, homodimer. Heterotetramer of two MnmE and two MnmG subunits. K(+) is required as a cofactor.

It localises to the cytoplasm. Exhibits a very high intrinsic GTPase hydrolysis rate. Involved in the addition of a carboxymethylaminomethyl (cmnm) group at the wobble position (U34) of certain tRNAs, forming tRNA-cmnm(5)s(2)U34. The polypeptide is tRNA modification GTPase MnmE (Thermoanaerobacter sp. (strain X514)).